A 326-amino-acid polypeptide reads, in one-letter code: Cyclin-dependent kinase 6 (326 aa).

An N-acetylmethionine modification is found at Met-1. Phosphotyrosine occurs at positions 13 and 24. Residues 13–300 enclose the Protein kinase domain; sequence YECVAEIGEG…AYGALNHPYF (288 aa). ATP-binding positions include 19 to 27 and Lys-43; that span reads IGEGAYGKV. Thr-49 and Thr-70 each carry phosphothreonine. Asp-145 (proton acceptor) is an active-site residue. The residue at position 177 (Thr-177) is a Phosphothreonine. N6-acetyllysine is present on Lys-264. Residue Ser-319 is modified to Phosphoserine. Thr-325 carries the post-translational modification Phosphothreonine.

Belongs to the protein kinase superfamily. CMGC Ser/Thr protein kinase family. CDC2/CDKX subfamily. As to quaternary structure, interaction with D-type G1 cyclins. Cyclin binding promotes enzyme activation by phosphorylation at Thr-177. Binds to RUNX1, CDKN2D, FBXO7 and CDKN2C/p18-INK4c. Forms a cytoplasmic complex with Hsp90/HSP90AB1 and CDC37. FBXO7-binding promotes D-type cyclin binding. Post-translationally, thr-177 phosphorylation and Tyr-24 dephosphorylation promotes kinase activity. In terms of tissue distribution, expressed in subgranular zone (SGZ) of the hippocampal dentate gyrus (DG) and the subventricular zone (SVZ) of the lateral ventricles whose neural precursor cells (NPC) give rise to dentate granule neurons and olfactory bulb (OB) interneurons, respectively. Expressed in the neuroepithelium of the cerebral cortex of the developing brain.

The protein resides in the cytoplasm. The protein localises to the nucleus. Its subcellular location is the cell projection. It localises to the ruffle. It is found in the cytoskeleton. The protein resides in the microtubule organizing center. The protein localises to the centrosome. The enzyme catalyses L-seryl-[protein] + ATP = O-phospho-L-seryl-[protein] + ADP + H(+). It carries out the reaction L-threonyl-[protein] + ATP = O-phospho-L-threonyl-[protein] + ADP + H(+). Activated by Thr-177 phosphorylation and Tyr-24 dephosphorylation. Rapidly down-regulated prior to cell differentiation (e.g. erythroid and osteoblast). Its function is as follows. Serine/threonine-protein kinase involved in the control of the cell cycle and differentiation; promotes G1/S transition. Phosphorylates pRB/RB1 and NPM1. Interacts with D-type G1 cyclins during interphase at G1 to form a pRB/RB1 kinase and controls the entrance into the cell cycle. Involved in initiation and maintenance of cell cycle exit during cell differentiation; prevents cell proliferation and negatively regulates cell differentiation, but is required for the proliferation of specific cell types (e.g. erythroid and hematopoietic cells). Essential for cell proliferation within the dentate gyrus of the hippocampus and the subventricular zone of the lateral ventricles. Required during thymocyte development. Promotes the production of newborn neurons, probably by modulating G1 length. Promotes, at least in astrocytes, changes in patterns of gene expression, changes in the actin cytoskeleton including loss of stress fibers, and enhanced motility during cell differentiation. Prevents myeloid differentiation by interfering with RUNX1 and reducing its transcription transactivation activity, but promotes proliferation of normal myeloid progenitors. Delays senescence. Promotes the proliferation of beta-cells in pancreatic islets of Langerhans. May play a role in the centrosome organization during the cell cycle phases. In Mus musculus (Mouse), this protein is Cyclin-dependent kinase 6 (Cdk6).